Consider the following 109-residue polypeptide: UPF0122 protein CLL_A1244 (109 aa).

The protein belongs to the UPF0122 family.

In terms of biological role, might take part in the signal recognition particle (SRP) pathway. This is inferred from the conservation of its genetic proximity to ftsY/ffh. May be a regulatory protein. This Clostridium botulinum (strain Eklund 17B / Type B) protein is UPF0122 protein CLL_A1244.